The following is a 648-amino-acid chain: Probable LRR receptor-like serine/threonine-protein kinase At4g30520 (648 aa).

The N-terminal stretch at methionine 1 to serine 30 is a signal peptide. The Extracellular portion of the chain corresponds to serine 31–leucine 238. N-linked (GlcNAc...) asparagine glycosylation is found at asparagine 99 and asparagine 112. 4 LRR repeats span residues leucine 100–proline 125, leucine 127–leucine 148, serine 149–isoleucine 172, and histidine 174–valine 199. 2 N-linked (GlcNAc...) asparagine glycosylation sites follow: asparagine 158 and asparagine 184. A helical transmembrane segment spans residues alanine 239–phenylalanine 259. Over cysteine 260–arginine 648 the chain is Cytoplasmic. Threonine 300 carries the post-translational modification Phosphothreonine. One can recognise a Protein kinase domain in the interval phenylalanine 303–alanine 582. Leucine 309 to valine 317 provides a ligand contact to ATP. At threonine 326 the chain carries Phosphothreonine. An ATP-binding site is contributed by lysine 331. A phosphoserine mark is found at serine 384 and serine 387. Aspartate 426 acts as the Proton acceptor in catalysis. Threonine 459, threonine 460, and threonine 465 each carry phosphothreonine. Residue tyrosine 473 is modified to Phosphotyrosine. Serine 475 bears the Phosphoserine mark. The residue at position 476 (threonine 476) is a Phosphothreonine. Serine 480 carries the post-translational modification Phosphoserine. At threonine 555 the chain carries Phosphothreonine.

The protein belongs to the protein kinase superfamily. Ser/Thr protein kinase family.

The protein localises to the cell membrane. The catalysed reaction is L-seryl-[protein] + ATP = O-phospho-L-seryl-[protein] + ADP + H(+). It carries out the reaction L-threonyl-[protein] + ATP = O-phospho-L-threonyl-[protein] + ADP + H(+). This Arabidopsis thaliana (Mouse-ear cress) protein is Probable LRR receptor-like serine/threonine-protein kinase At4g30520.